Reading from the N-terminus, the 319-residue chain is Carboxylesterase NlhH (319 aa).

The Involved in the stabilization of the negatively charged intermediate by the formation of the oxyanion hole motif lies at 88–90 (HGG). Residues Ser162, Asp260, and His290 contribute to the active site.

Belongs to the 'GDXG' lipolytic enzyme family. As to quaternary structure, monomer.

The catalysed reaction is a carboxylic ester + H2O = an alcohol + a carboxylate + H(+). Functionally, hydrolyzes various short-chain esters. The polypeptide is Carboxylesterase NlhH (nlhH) (Mycobacterium tuberculosis (strain CDC 1551 / Oshkosh)).